The primary structure comprises 415 residues: Putative O-antigen transporter (415 aa).

Topologically, residues M1 to N11 are cytoplasmic. Residues V12–Y32 form a helical membrane-spanning segment. Over L33–N41 the chain is Periplasmic. Residues F42 to G62 form a helical membrane-spanning segment. The Cytoplasmic segment spans residues F63–S83. The helical transmembrane segment at I84–T104 threads the bilayer. Over S105–A117 the chain is Periplasmic. A helical membrane pass occupies residues V118–F138. Over Q139–A173 the chain is Cytoplasmic. Residues I174 to V194 traverse the membrane as a helical segment. Residues V195–V220 are Periplasmic-facing. Residues F221–I241 traverse the membrane as a helical segment. Over S242–T295 the chain is Cytoplasmic. The helical transmembrane segment at C296–V316 threads the bilayer. The Periplasmic portion of the chain corresponds to K317–V328. Residues I329–I349 form a helical membrane-spanning segment. Over Q350 to S362 the chain is Cytoplasmic. A helical transmembrane segment spans residues K363–F383. The Periplasmic segment spans residues K384–E385. Residues I386–F406 traverse the membrane as a helical segment. Over V407–C415 the chain is Cytoplasmic.

This sequence belongs to the polysaccharide synthase family.

It is found in the cell inner membrane. Its pathway is bacterial outer membrane biogenesis; LPS O-antigen biosynthesis. Its function is as follows. May be involved in the translocation process of the nascent O-polysaccharide molecules and/or its ligation to lipid A core units. This is Putative O-antigen transporter (rfbX) from Escherichia coli (strain K12).